Reading from the N-terminus, the 776-residue chain is Protein SEY1 (776 aa).

Residues 1 to 681 lie on the Cytoplasmic side of the membrane; it reads MADRSAIQLI…KRSIITTRTH (681 aa). Positions 34 to 263 constitute a GB1/RHD3-type G domain; that stretch reads GLDYHVISVF…TENYYFKPQY (230 aa). 44 to 51 serves as a coordination point for GTP; that stretch reads GSQSSGKS. A helical transmembrane segment spans residues 682–702; it reads IPPWIYVLLAVLGWNEFVAVI. Residues 703–705 lie on the Lumenal side of the membrane; the sequence is RNP. The helical transmembrane segment at 706-726 threads the bilayer; the sequence is LFVTLTLILGATFFVIHKFGL. Residues 727-776 are Cytoplasmic-facing; sequence WGPVVNVVQSAVGETRTAIKDKLRQFVVEDHEVKESFEMKDFSKNEQKEK.

This sequence belongs to the TRAFAC class dynamin-like GTPase superfamily. GB1/RHD3 GTPase family. RHD3 subfamily. As to quaternary structure, interacts with RTN1 and YOP1; GTP binding is not required for these interactions.

Its subcellular location is the endoplasmic reticulum membrane. Functionally, cooperates with the reticulon proteins RTN1 and RTN2 and the tubule-shaping DP1 family protein YOP1 to generate and maintain the structure of the tubular endoplasmic reticulum network. Has GTPase activity, which is required for its function in ER organization. This is Protein SEY1 from Saccharomyces cerevisiae (strain RM11-1a) (Baker's yeast).